A 358-amino-acid chain; its full sequence is DNA replication and repair protein RecF (358 aa).

30–37 is an ATP binding site; it reads GANGSGKT.

This sequence belongs to the RecF family.

It is found in the cytoplasm. The RecF protein is involved in DNA metabolism; it is required for DNA replication and normal SOS inducibility. RecF binds preferentially to single-stranded, linear DNA. It also seems to bind ATP. In Acinetobacter baylyi (strain ATCC 33305 / BD413 / ADP1), this protein is DNA replication and repair protein RecF.